The primary structure comprises 1463 residues: Kinesin-like protein KIF15 (1463 aa).

The 337-residue stretch at 18-354 folds into the Kinesin motor domain; it reads AIKVFVRVRP…LKFARRAKMI (337 aa). An ATP-binding site is contributed by 99–106; sequence GQTGSGKT. The segment at 387 to 424 is disordered; the sequence is AEGSIPRGPSESGDSQMSNSSTESNGPVSGQQSGSSSS. Residues 398 to 414 are compositionally biased toward polar residues; that stretch reads SGDSQMSNSSTESNGPV. The span at 415–424 shows a compositional bias: low complexity; it reads SGQQSGSSSS. Coiled-coil stretches lie at residues 436 to 517 and 586 to 646; these read SLRD…LEHN and TSTL…QGMK. Disordered regions lie at residues 686-720, 1335-1356, and 1409-1444; these read AGEE…SGDI, FKEK…SKLT, and QLGK…EAGA. The span at 701–715 shows a compositional bias: polar residues; that stretch reads DNGSPLRSHSTNSLP. Residues 1418–1428 are compositionally biased toward basic and acidic residues; the sequence is EQMKRDYEALQ.

The protein belongs to the TRAFAC class myosin-kinesin ATPase superfamily. Kinesin family. KLP2 subfamily. Homodimer.

Its subcellular location is the cytoplasm. The protein localises to the cytoskeleton. The protein resides in the spindle. Plus-end directed kinesin-like motor enzyme involved in mitotic spindle assembly. Plays a role in positioning spindle poles during mitosis, specifically at prometaphase. The polypeptide is Kinesin-like protein KIF15 (KIF15) (Strongylocentrotus purpuratus (Purple sea urchin)).